A 295-amino-acid chain; its full sequence is Ribosomal protein L11 methyltransferase (295 aa).

Residues T145, G166, D188, and N230 each coordinate S-adenosyl-L-methionine.

The protein belongs to the methyltransferase superfamily. PrmA family.

It localises to the cytoplasm. It catalyses the reaction L-lysyl-[protein] + 3 S-adenosyl-L-methionine = N(6),N(6),N(6)-trimethyl-L-lysyl-[protein] + 3 S-adenosyl-L-homocysteine + 3 H(+). Functionally, methylates ribosomal protein L11. The polypeptide is Ribosomal protein L11 methyltransferase (Pectobacterium carotovorum subsp. carotovorum (strain PC1)).